The chain runs to 354 residues: Heat-inducible transcription repressor HrcA (354 aa).

This sequence belongs to the HrcA family.

Negative regulator of class I heat shock genes (grpE-dnaK-dnaJ and groELS operons). Prevents heat-shock induction of these operons. This Novosphingobium aromaticivorans (strain ATCC 700278 / DSM 12444 / CCUG 56034 / CIP 105152 / NBRC 16084 / F199) protein is Heat-inducible transcription repressor HrcA.